A 231-amino-acid polypeptide reads, in one-letter code: Large ribosomal subunit protein uL1 (231 aa).

This sequence belongs to the universal ribosomal protein uL1 family. As to quaternary structure, part of the 50S ribosomal subunit.

In terms of biological role, binds directly to 23S rRNA. The L1 stalk is quite mobile in the ribosome, and is involved in E site tRNA release. Functionally, protein L1 is also a translational repressor protein, it controls the translation of the L11 operon by binding to its mRNA. This chain is Large ribosomal subunit protein uL1, found in Verminephrobacter eiseniae (strain EF01-2).